Consider the following 862-residue polypeptide: Short transient receptor potential channel 7 (862 aa).

The segment at 1–21 (MLGSNTFKNMQRRHTTLREKG) is disordered. Residues 1-351 (MLGSNTFKNM…GLRQQSIAVK (351 aa)) are Cytoplasmic-facing. The span at 10-21 (MQRRHTTLREKG) shows a compositional bias: basic residues. The residue at position 15 (T15) is a Phosphothreonine; by PKG/PRKG1. ANK repeat units follow at residues 42–71 (PEEE…TLNF), 77–106 (MGQN…LARV), 108–134 (DALL…FAQG), and 163–192 (HDIT…RIER). A helical membrane pass occupies residues 352 to 372 (FLAVFGVSIGLPFLAIAYWIA). Topologically, residues 373-383 (PCSKLGQTLRS) are extracellular. Residues 384–404 (PFMKFVAHAVSFTIFLGLLVV) form a helical membrane-spanning segment. The Cytoplasmic portion of the chain corresponds to 405-465 (NASDRFEGVK…KEIWEEGPRE (61 aa)). The helical transmembrane segment at 466–486 (YVLHLWNLLDFGMLSIFVASF) threads the bilayer. The Extracellular portion of the chain corresponds to 487 to 537 (TARFMAFLKASEAQLYVDQYVQDVTLHNVSLPPEVAYFTYARDKWWPSDPQ). N514 carries N-linked (GlcNAc...) asparagine glycosylation. A helical transmembrane segment spans residues 538 to 558 (IISEGLYAIAVVLSFSRIAYI). Over 559-581 (LPANESFGPLQISLGRTVKDIFK) the chain is Cytoplasmic. A helical transmembrane segment spans residues 582 to 602 (FMVIFIMVFVAFMIGMFNLYS). The Extracellular portion of the chain corresponds to 603-651 (YYRGAKYNPAFTTVEESFKTLFWSIFGLSEVISVVLKYDHKFIENIGYV). The chain crosses the membrane as a helical span at residues 652–672 (LYGVYNVTMVVVLLNMLIAMI). Over 673–862 (NNSYQEIEED…HLRVNQGKDI (190 aa)) the chain is Cytoplasmic.

The protein belongs to the transient receptor (TC 1.A.4) family. STrpC subfamily. TRPC7 sub-subfamily. As to quaternary structure, interacts with MX1 and RNF24. Interacts (via ANK-repeat domains) with PRKG1. In terms of processing, phosphorylation by PRKG1 at Thr-15 negatively regulates TRPC7 activity.

It localises to the cell membrane. It is found in the nucleus envelope. It catalyses the reaction Ca(2+)(in) = Ca(2+)(out). Forms a receptor-activated non-selective calcium permeant cation channel. Probably is operated by a phosphatidylinositol second messenger system activated by receptor tyrosine kinases or G-protein coupled receptors. Activated by diacylglycerol (DAG). May also be activated by intracellular calcium store depletion. The polypeptide is Short transient receptor potential channel 7 (Trpc7) (Mus musculus (Mouse)).